The chain runs to 278 residues: Elongation factor Ts (278 aa).

The tract at residues 80–83 (TDFV) is involved in Mg(2+) ion dislocation from EF-Tu.

This sequence belongs to the EF-Ts family.

It is found in the cytoplasm. Associates with the EF-Tu.GDP complex and induces the exchange of GDP to GTP. It remains bound to the aminoacyl-tRNA.EF-Tu.GTP complex up to the GTP hydrolysis stage on the ribosome. This Paenarthrobacter aurescens (strain TC1) protein is Elongation factor Ts.